A 410-amino-acid chain; its full sequence is Angiopoietin-related protein 4 (410 aa).

Residues 1-23 (MRCAPTAGAALVLCAATAGLLSA) form the signal peptide. A disordered region spans residues 79–101 (ACQGPKGKDAPFKDSEDRVPEGQ). Residues 84–98 (KGKDAPFKDSEDRVP) show a composition bias toward basic and acidic residues. Residues 104-152 (ETLQSLQTQLKAQNSKIQQLFQKVAQQQRYLSKQNLRIQNLQSQIDLLA) adopt a coiled-coil conformation. A glycan (N-linked (GlcNAc...) asparagine) is linked at Asn-181. One can recognise a Fibrinogen C-terminal domain in the interval 183-405 (THLHRPPRDC…ATTLLIQPME (223 aa)). Cys-192 and Cys-220 are joined by a disulfide. Residues Asn-236 and Asn-242 are each glycosylated (N-linked (GlcNAc...) asparagine). Cysteines 345 and 358 form a disulfide.

Homooligomer; disulfide-linked via Cys residues in the N-terminal part of the protein. The homooligomer undergoes proteolytic processing to release the ANGPTL4 C-terminal chain, which circulates as a monomer. The homooligomer unprocessed form is able to interact with the extracellular matrix. Post-translationally, N-glycosylated. In terms of processing, forms disulfide-linked dimers and tetramers. Cleaved into a smaller N-terminal chain and a larger chain that contains the fibrinogen C-terminal domain; both cleaved and uncleaved forms are detected in the extracellular space. The cleaved form is not present within the cell. In terms of tissue distribution, detected in liver and kidney. Predominantly expressed in adipose tissue and is strongly up-regulated by fasting in white adipose tissue and liver. More abundant in areas of lower flow stress in the inner curvature compared to the outer curvature regions of the aorta (at protein level).

It is found in the secreted. Its subcellular location is the extracellular space. The protein localises to the extracellular matrix. Its function is as follows. Mediates inactivation of the lipoprotein lipase LPL, and thereby plays a role in the regulation of triglyceride clearance from the blood serum and in lipid metabolism. May also play a role in regulating glucose homeostasis and insulin sensitivity. Inhibits proliferation, migration, and tubule formation of endothelial cells and reduces vascular leakage. Upon heterologous expression, inhibits the adhesion of endothelial cell to the extracellular matrix (ECM), and inhibits the reorganization of the actin cytoskeleton, formation of actin stress fibers and focal adhesions in endothelial cells that have adhered to ANGPTL4-containing ECM (in vitro). Depending on context, may modulate tumor-related angiogenesis. Functionally, mediates inactivation of the lipoprotein lipase LPL, and thereby plays an important role in the regulation of triglyceride clearance from the blood serum and in lipid metabolism. Has higher activity in LPL inactivation than the uncleaved protein. The chain is Angiopoietin-related protein 4 (Angptl4) from Mus musculus (Mouse).